The following is a 4544-amino-acid chain: Prolow-density lipoprotein receptor-related protein 1 (4544 aa).

The signal sequence occupies residues 1–19 (MLTPPLLLLLPLLSALVAA). At 20–4419 (AIDAPKTCSP…EHVFSQQQPG (4400 aa)) the chain is on the extracellular side. 2 LDL-receptor class A domains span residues 25-66 (KTCS…ICPQ) and 70-110 (QRCQ…HCRE). Disulfide bonds link cysteine 27/cysteine 40, cysteine 34/cysteine 53, cysteine 47/cysteine 64, cysteine 72/cysteine 85, cysteine 79/cysteine 98, and cysteine 92/cysteine 108. The region spanning 111 to 149 (LQGNCSRLGCQHHCVPTLDGPTCYCNSSFQLQADGKTCK) is the EGF-like 1 domain. An N-linked (GlcNAc...) asparagine glycan is attached at asparagine 114. 6 cysteine pairs are disulfide-bonded: cysteine 115-cysteine 124, cysteine 120-cysteine 133, cysteine 135-cysteine 148, cysteine 154-cysteine 164, cysteine 160-cysteine 173, and cysteine 175-cysteine 188. A glycan (N-linked (GlcNAc...) asparagine) is linked at asparagine 136. The region spanning 150–189 (DFDECSVYGTCSQLCTNTDGSFICGCVEGYLLQPDNRSCK) is the EGF-like 2; calcium-binding domain. Asparagine 185, asparagine 239, and asparagine 274 each carry an N-linked (GlcNAc...) asparagine glycan. 3 LDL-receptor class B repeats span residues 292 to 334 (GNFY…DPAM), 335 to 378 (GKVF…DLVS), and 379 to 422 (RLVY…FENY). An N-linked (GlcNAc...) asparagine glycan is attached at asparagine 357. N-linked (GlcNAc...) asparagine glycosylation is present at asparagine 446. The EGF-like 3 domain occupies 474–520 (RSHACENDQYGKPGGCSDICLLANSHKARTCRCRSGFSLGSDGKSCK). 3 disulfide bridges follow: cysteine 478–cysteine 493, cysteine 489–cysteine 504, and cysteine 506–cysteine 519. LDL-receptor class B repeat units lie at residues 571 to 613 (GFIY…DWMG), 614 to 659 (DNLY…DPLN), 660 to 710 (GWMY…DIPA), and 711 to 754 (GRLY…HGNY). Residue asparagine 729 is glycosylated (N-linked (GlcNAc...) (complex) asparagine). The region spanning 803–843 (GTNKCRVNNGGCSSLCLATPGSRQCACAEDQVLDADGVTCL) is the EGF-like 4 domain. 33 disulfide bridges follow: cysteine 807–cysteine 818, cysteine 814–cysteine 827, cysteine 829–cysteine 842, cysteine 854–cysteine 866, cysteine 861–cysteine 879, cysteine 873–cysteine 890, cysteine 895–cysteine 907, cysteine 902–cysteine 920, cysteine 914–cysteine 931, cysteine 936–cysteine 948, cysteine 943–cysteine 961, cysteine 955–cysteine 971, cysteine 976–cysteine 989, cysteine 984–cysteine 1002, cysteine 996–cysteine 1011, cysteine 1015–cysteine 1027, cysteine 1022–cysteine 1040, cysteine 1034–cysteine 1051, cysteine 1062–cysteine 1075, cysteine 1069–cysteine 1088, cysteine 1082–cysteine 1097, cysteine 1104–cysteine 1118, cysteine 1112–cysteine 1131, cysteine 1125–cysteine 1140, cysteine 1145–cysteine 1159, cysteine 1152–cysteine 1172, cysteine 1166–cysteine 1182, cysteine 1185–cysteine 1196, cysteine 1192–cysteine 1206, cysteine 1208–cysteine 1221, cysteine 1227–cysteine 1237, cysteine 1233–cysteine 1246, and cysteine 1248–cysteine 1261. LDL-receptor class A domains follow at residues 852-892 (PQCQ…LCHQ), 893-933 (HTCP…TCSA), 934-973 (RTCP…SCAY), 974-1013 (PTCF…GCSH), 1013-1053 (HSCS…NCTN), 1060-1099 (GGCH…SCEG), 1102-1142 (HVCD…NCES), and 1143-1182 (LACR…GELC). Residues tryptophan 871, aspartate 874, aspartate 876, aspartate 878, aspartate 884, and glutamate 885 each contribute to the Ca(2+) site. The N-linked (GlcNAc...) asparagine glycan is linked to asparagine 928. Positions 1032, 1035, 1037, 1039, 1045, and 1046 each coordinate Ca(2+). A glycan (N-linked (GlcNAc...) asparagine) is linked at asparagine 1050. 6 residues coordinate Ca(2+): tryptophan 1080, aspartate 1083, aspartate 1085, aspartate 1087, aspartate 1093, and glutamate 1094. 2 N-linked (GlcNAc...) asparagine glycosylation sites follow: asparagine 1154 and asparagine 1155. 2 EGF-like domains span residues 1183–1222 (DQCS…HTCQ) and 1223–1262 (IQSY…ESCR). N-linked (GlcNAc...) asparagine glycosylation is found at asparagine 1195 and asparagine 1218. LDL-receptor class B repeat units follow at residues 1309–1355 (SALY…DWIA), 1356–1398 (GNIY…DPRD), 1399–1445 (GILF…DYLE), 1446–1490 (KRIL…YGGE), and 1491–1531 (VYWT…YHPS). An N-linked (GlcNAc...) (complex) asparagine glycan is attached at asparagine 1511. Positions 1536–1579 (APNPCEANGGQGPCSHLCLINYNRTVSCACPHLMKLHKDNTTCY) constitute an EGF-like 7 domain. 3 disulfide bridges follow: cysteine 1540-cysteine 1553, cysteine 1549-cysteine 1563, and cysteine 1565-cysteine 1578. Asparagine 1558, asparagine 1575, asparagine 1616, and asparagine 1645 each carry an N-linked (GlcNAc...) asparagine glycan. LDL-receptor class B repeat units lie at residues 1627-1669 (QRVY…DWVS), 1670-1713 (RNLF…HPLR), 1714-1753 (GKLY…DFPE), and 1754-1798 (SKLY…MGDK). Asparagine 1723, asparagine 1733, asparagine 1763, and asparagine 1825 each carry an N-linked (GlcNAc...) asparagine glycan. Residues 1846-1887 (GTNPCSVNNGDCSQLCLPTSETTRSCMCTAGYSLRSGQQACE) enclose the EGF-like 8 domain. Disulfide bonds link cysteine 1850/cysteine 1861, cysteine 1857/cysteine 1871, and cysteine 1873/cysteine 1886. An N-linked (GlcNAc...) asparagine glycan is attached at asparagine 1933. LDL-receptor class B repeat units lie at residues 1934 to 1976 (DTIY…DWIA), 1977 to 2019 (GNIY…HPEK), 2020 to 2063 (GYLF…DYQD), and 2064 to 2107 (GKLY…FEDF). A glycan (N-linked (GlcNAc...) asparagine) is linked at asparagine 1995. N6-acetyllysine is present on lysine 2009. The N-linked (GlcNAc...) asparagine glycan is linked to asparagine 2048. N-linked (GlcNAc...) asparagine glycosylation is found at asparagine 2117 and asparagine 2127. Positions 2155-2195 (GTNVCAVANGGCQQLCLYRGRGQRACACAHGMLAEDGASCR) constitute an EGF-like 9 domain. Intrachain disulfides connect cysteine 2159/cysteine 2170, cysteine 2166/cysteine 2180, and cysteine 2182/cysteine 2194. 5 LDL-receptor class B repeats span residues 2253-2294 (NRIF…HRGW), 2295-2343 (DTLY…DECQ), 2344-2388 (NLMF…DHRA), 2389-2431 (EKLY…YGEH), and 2432-2473 (IFWT…VAND). The N-linked (GlcNAc...) asparagine glycan is linked to asparagine 2472. In terms of domain architecture, EGF-like 10 spans 2478 to 2518 (ELSPCRINNGGCQDLCLLTHQGHVNCSCRGGRILQDDLTCR). Cystine bridges form between cysteine 2482–cysteine 2493, cysteine 2489–cysteine 2503, and cysteine 2505–cysteine 2517. N-linked (GlcNAc...) asparagine glycosylation is present at asparagine 2502. An N-linked (GlcNAc...) asparagine glycan is attached at asparagine 2521. LDL-receptor class A domains follow at residues 2522 to 2563 (SSCR…YCNS), 2564 to 2602 (RRCK…PCNK), 2603 to 2641 (TACG…NCSA), 2642 to 2690 (TDCS…DCPG), 2694 to 2732 (PRCP…HCNK), 2732 to 2771 (KFCS…HCEG), and 2772 to 2814 (KTCG…GCLY). Cystine bridges form between cysteine 2524/cysteine 2537, cysteine 2532/cysteine 2550, cysteine 2544/cysteine 2561, cysteine 2566/cysteine 2578, cysteine 2573/cysteine 2591, and cysteine 2585/cysteine 2600. N-linked (GlcNAc...) asparagine glycosylation occurs at asparagine 2539. N-linked (GlcNAc...) asparagine glycosylation occurs at asparagine 2601. Intrachain disulfides connect cysteine 2605–cysteine 2617, cysteine 2612–cysteine 2630, cysteine 2624–cysteine 2639, cysteine 2644–cysteine 2666, cysteine 2660–cysteine 2679, cysteine 2673–cysteine 2688, cysteine 2696–cysteine 2708, cysteine 2703–cysteine 2721, cysteine 2715–cysteine 2730, cysteine 2734–cysteine 2746, cysteine 2741–cysteine 2759, cysteine 2753–cysteine 2769, cysteine 2774–cysteine 2787, cysteine 2781–cysteine 2800, and cysteine 2794–cysteine 2812. Asparagine 2620 and asparagine 2638 each carry an N-linked (GlcNAc...) asparagine glycan. N-linked (GlcNAc...) asparagine glycosylation occurs at asparagine 2815. 3 consecutive LDL-receptor class A domains span residues 2816 to 2855 (STCD…ECEY), 2856 to 2899 (PTCG…HCTS), and 2902 to 2940 (HKCN…RGCH). Intrachain disulfides connect cysteine 2818-cysteine 2830, cysteine 2825-cysteine 2843, cysteine 2837-cysteine 2853, cysteine 2858-cysteine 2870, cysteine 2865-cysteine 2884, cysteine 2878-cysteine 2897, cysteine 2904-cysteine 2917, cysteine 2912-cysteine 2930, cysteine 2924-cysteine 2939, cysteine 2944-cysteine 2956, cysteine 2952-cysteine 2965, cysteine 2967-cysteine 2980, cysteine 2986-cysteine 2996, cysteine 2992-cysteine 3005, and cysteine 3007-cysteine 3021. A glycan (N-linked (GlcNAc...) asparagine) is linked at asparagine 2905. In terms of domain architecture, EGF-like 11 spans 2941–2981 (INECLSRKLSGCSQDCEDLKIGFKCRCRPGFRLKDDGRTCA). The 41-residue stretch at 2982–3022 (DVDECSTTFPCSQRCINTHGSYKCLCVEGYAPRGGDPHSCK) folds into the EGF-like 12; calcium-binding domain. 2 N-linked (GlcNAc...) asparagine glycosylation sites follow: asparagine 3048 and asparagine 3089. 5 LDL-receptor class B repeats span residues 3069–3113 (QMIY…DWVG), 3114–3156 (GNLY…DVQN), 3157–3200 (GYLY…DYVT), 3201–3243 (ERIY…FEDY), and 3244–3284 (VYWT…FHAL). Asparagine 3264 carries an N-linked (GlcNAc...) asparagine glycan. Residues 3290 to 3331 (PNHPCKVNNGGCSNLCLLSPGGGHKCACPTNFYLGSDGRTCV) enclose the EGF-like 13 domain. Cystine bridges form between cysteine 3294/cysteine 3305, cysteine 3301/cysteine 3315, and cysteine 3317/cysteine 3330. LDL-receptor class A domains are found at residues 3332–3371 (SNCT…DCPE), 3372–3410 (FKCR…NCDI), 3411–3450 (HVCL…DCPE), 3451–3491 (VTCA…NCTQ), 3492–3533 (MTCG…ECDE), 3534–3572 (RTCE…SCTP), 3573–3611 (RPCS…DCTP), 3611–3649 (PRCD…ACGT), 3652–3692 (RTCP…ECAR), 3693–3733 (FVCP…DCEP), and 3739–3778 (THCK…DCSI). Asparagine 3333 carries an N-linked (GlcNAc...) asparagine glycan. 39 disulfides stabilise this stretch: cysteine 3334–cysteine 3346, cysteine 3341–cysteine 3359, cysteine 3353–cysteine 3369, cysteine 3374–cysteine 3386, cysteine 3381–cysteine 3399, cysteine 3393–cysteine 3408, cysteine 3413–cysteine 3426, cysteine 3420–cysteine 3439, cysteine 3433–cysteine 3448, cysteine 3453–cysteine 3466, cysteine 3460–cysteine 3479, cysteine 3473–cysteine 3489, cysteine 3494–cysteine 3507, cysteine 3501–cysteine 3520, cysteine 3514–cysteine 3531, cysteine 3536–cysteine 3548, cysteine 3543–cysteine 3561, cysteine 3555–cysteine 3570, cysteine 3575–cysteine 3587, cysteine 3582–cysteine 3600, cysteine 3594–cysteine 3609, cysteine 3613–cysteine 3625, cysteine 3620–cysteine 3638, cysteine 3632–cysteine 3647, cysteine 3654–cysteine 3666, cysteine 3661–cysteine 3679, cysteine 3673–cysteine 3690, cysteine 3695–cysteine 3709, cysteine 3703–cysteine 3722, cysteine 3716–cysteine 3731, cysteine 3741–cysteine 3754, cysteine 3749–cysteine 3767, cysteine 3761–cysteine 3776, cysteine 3785–cysteine 3798, cysteine 3792–cysteine 3807, cysteine 3809–cysteine 3822, cysteine 3828–cysteine 3838, cysteine 3834–cysteine 3847, and cysteine 3849–cysteine 3860. An N-linked (GlcNAc...) asparagine glycan is attached at asparagine 3488. Asparagine 3662 carries an N-linked (GlcNAc...) asparagine glycan. EGF-like domains lie at 3781 to 3823 (KLTS…PGCQ) and 3824 to 3861 (DINE…NTCK). N-linked (GlcNAc...) asparagine glycosylation occurs at asparagine 3788. Asparagine 3839 carries N-linked (GlcNAc...) asparagine glycosylation. 4 LDL-receptor class B repeats span residues 3912-3954 (GRVY…HLNI), 3970-4012 (GNVY…DPLR), 4013-4056 (GTMY…DYHN), and 4057-4101 (ERLY…FEDY). Residues 3940–3943 (RHRR) carry the Recognition site for proteolytical processing motif. An N-linked (GlcNAc...) asparagine glycan is attached at asparagine 3953. N-linked (GlcNAc...) asparagine glycosylation is found at asparagine 4075 and asparagine 4125. 7 consecutive EGF-like domains span residues 4147–4183 (VTNP…GTCV), 4196–4232 (RPGT…DKCE), 4232–4268 (ELDQ…PKCT), 4268–4304 (TQQV…DRCQ), 4304–4340 (QYRQ…SRCE), 4340–4375 (EVNK…PSCL), and 4373–4409 (SCLT…PRCE). Intrachain disulfides connect cysteine 4151/cysteine 4160, cysteine 4156/cysteine 4169, cysteine 4171/cysteine 4182, cysteine 4200/cysteine 4210, cysteine 4204/cysteine 4220, cysteine 4222/cysteine 4231, cysteine 4236/cysteine 4246, cysteine 4240/cysteine 4256, cysteine 4258/cysteine 4267, cysteine 4272/cysteine 4282, cysteine 4276/cysteine 4292, cysteine 4294/cysteine 4303, cysteine 4308/cysteine 4318, cysteine 4312/cysteine 4328, cysteine 4330/cysteine 4339, cysteine 4344/cysteine 4352, and cysteine 4347/cysteine 4363. The N-linked (GlcNAc...) asparagine glycan is linked to asparagine 4179. N-linked (GlcNAc...) asparagine glycans are attached at residues asparagine 4278 and asparagine 4279. Asparagine 4364 carries an N-linked (GlcNAc...) asparagine glycan. Cystine bridges form between cysteine 4365–cysteine 4374, cysteine 4377–cysteine 4387, cysteine 4381–cysteine 4397, and cysteine 4399–cysteine 4408. A helical transmembrane segment spans residues 4420-4444 (HIASILIPLLLLLLLVLVAGVVFWY). The Cytoplasmic segment spans residues 4445-4544 (KRRVQGAKGF…PEDEIGDPLA (100 aa)). The interaction with MAFB stretch occupies residues 4445-4544 (KRRVQGAKGF…PEDEIGDPLA (100 aa)). Phosphothreonine is present on threonine 4460. The NPXY motif motif lies at 4502–4507 (FTNPVY). Tyrosine 4507 carries the post-translational modification Phosphotyrosine. A phosphoserine mark is found at serine 4517, serine 4520, and serine 4523.

It belongs to the LDLR family. In terms of assembly, heterodimer of an 85-kDa membrane-bound carboxyl subunit and a non-covalently attached 515-kDa N-terminal subunit. Intracellular domain interacts with MAFB. Found in a complex with PID1/PCLI1, LRP1 and CUBNI. Interacts with SNX17, PID1/PCLI1, PDGF and CUBN. The intracellular domain interacts with SHC1, GULP1 and DAB1. Can weakly interact (via NPXY motif) with DAB2 (via PID domain); the interaction is enhanced by tyrosine phosphorylation of the NPXY motif. Interacts with MDK; promotes neuronal survival. Interacts with LRPAP1; this interaction is followed by rapid internalization. Interacts with uPA/PLAU and PAI1/SERPINE1, either individually or in complex with each other, leading to rapid endocytosis; this interaction is abolished in the presence of LRPAP1/RAP. Also interacts with tPA/PLAT alone or in complex with SERPINE1. Interacts with the urokinase receptor PLAUR; this interaction leads to PLAUR internalization and is impaired in the presence of SORL1. Interacts with PDGFB. Interacts with TAU/MAPT, leading to endocytosis; this interaction is reduced in the presence of LRPAP1/RAP. Interacts with IGFBP3; this interaction mediates cell growth inhibition independently of IGF1. Interacts with ADGRG6. (Microbial infection) Interacts with bacterial exotoxins. As to quaternary structure, (Microbial infection) Interacts with Rift valley fever virus (RVFV) glycoprotein N; this interaction facilitates virus entry. Post-translationally, cleaved into a 85 kDa membrane-spanning subunit (LRP-85) and a 515 kDa large extracellular domain (LRP-515) that remains non-covalently associated. Gamma-secretase-dependent cleavage of LRP-85 releases the intracellular domain from the membrane. In terms of processing, the N-terminus is blocked. Phosphorylated on serine and threonine residues. Post-translationally, phosphorylated on tyrosine residues upon stimulation with PDGF. Tyrosine phosphorylation promotes interaction with SHC1. In terms of tissue distribution, most abundant in liver, brain and lung.

Its subcellular location is the cell membrane. It is found in the membrane. The protein resides in the coated pit. It localises to the cytoplasm. The protein localises to the nucleus. Its subcellular location is the golgi outpost. It is found in the cytoskeleton. The protein resides in the microtubule organizing center. Its function is as follows. Endocytic receptor involved in endocytosis and in phagocytosis of apoptotic cells. Required for early embryonic development. Involved in cellular lipid homeostasis. Involved in the plasma clearance of chylomicron remnants and activated LRPAP1 (alpha 2-macroglobulin), as well as the local metabolism of complexes between plasminogen activators and their endogenous inhibitors. Acts as an LRPAP1 alpha-2-macroglobulin receptor. Acts as TAU/MAPT receptor and controls the endocytosis of TAU/MAPT as well as its subsequent spread. May modulate cellular events, such as APP metabolism, kinase-dependent intracellular signaling, neuronal calcium signaling as well as neurotransmission. Also acts as a receptor for IGFBP3 to mediate cell growth inhibition. Functionally, (Microbial infection) Functions as a receptor for Pseudomonas aeruginosa exotoxin A. The protein is Prolow-density lipoprotein receptor-related protein 1 of Homo sapiens (Human).